We begin with the raw amino-acid sequence, 436 residues long: MDMKLQQVQVLKPQLTQELRQAITLLGYHSAELAEYIDELSLENPLIERKETDTPPLSYHKTNKNRMNAQEAGLQLSNPQKTLQDALKQQSLDMNLTNTEKKIFNYLIHSLDSNGYLEEDIEEAARRLSVSAKEAEAVLAKLQSLEPAGIGARSLQECILLQLQRLPNRNEQAEMLVSAHFDAFAQKKWKTLSVETGIPLHTIQDISDDIAALHPRPGLLFARPEQDVYIEPDIFITVKNGHIAAELNTRSFPEIDLHPQYRTLLSSGSCQDTVSYLSAKYQEWRWLSRALRQRKQTITRIINELITRQKDFFLKGRSAMKPLTLREVADCLSLHESTVSRAIKGKTIQTPYGLFEMKLFFSAKAEASGDGDASNYAVKTHLENLINQEDKTKPLSDQKLVDLLYEQHGIQISRRTVAKYRDQMNIPSSAARKRYK.

Positions 324–343 form a DNA-binding region, H-T-H motif; sequence TLREVADCLSLHESTVSRAI. An RPON box motif is present at residues 413-421; the sequence is SRRTVAKYR.

The protein belongs to the sigma-54 factor family. Interacts transiently with the RNAP core.

Its function is as follows. Sigma factors are initiation factors that promote the attachment of RNA polymerase (RNAP) to specific initiation sites and are then released. This sigma factor is responsible for the expression of the levanase operon. The open complex (sigma-54 and core RNA polymerase) serves as the receptor for receipt of the melting signal from the remotely bound activator protein LevR for the expression of the levanase operon. Associates with the RNAP core only in stationary phase cells. In Bacillus subtilis (strain 168), this protein is RNA polymerase sigma-54 factor (sigL).